The following is a 61-amino-acid chain: Small ribosomal subunit protein uS14B (61 aa).

Residues cysteine 24, cysteine 27, cysteine 40, and cysteine 43 each contribute to the Zn(2+) site.

This sequence belongs to the universal ribosomal protein uS14 family. Zinc-binding uS14 subfamily. Part of the 30S ribosomal subunit. Contacts proteins S3 and S10. Requires Zn(2+) as cofactor.

Binds 16S rRNA, required for the assembly of 30S particles and may also be responsible for determining the conformation of the 16S rRNA at the A site. The polypeptide is Small ribosomal subunit protein uS14B (Lactococcus lactis subsp. lactis (strain IL1403) (Streptococcus lactis)).